We begin with the raw amino-acid sequence, 552 residues long: Iduronate 2-sulfatase (552 aa).

The signal sequence occupies residues 1-29; it reads MSPPPPPPIWRQLSFSLLLGSFCIALESA. Residues 30–35 constitute a propeptide that is removed on maturation; sequence AQGNSA. Positions 47, 48, and 86 each coordinate Ca(2+). C86 (nucleophile) is an active-site residue. Position 86 is a 3-oxoalanine (Cys) (C86). An N-linked (GlcNAc...) asparagine glycan is attached at N117. H140 is an active-site residue. N146 is a glycosylation site (N-linked (GlcNAc...) asparagine). C173 and C186 are disulfide-bonded. Residues N248 and N282 are each glycosylated (N-linked (GlcNAc...) asparagine). Ca(2+) is bound by residues D336 and H337. C424 and C434 are disulfide-bonded. 2 N-linked (GlcNAc...) asparagine glycosylation sites follow: N515 and N539.

It belongs to the sulfatase family. As to quaternary structure, monomer. The 58-kDa mature form is composed of two chains resulting from proteolitic processing, the 42-kDa chain and the 14-kDa chain that remain stably associated and form the 58-kDa intermediate form which is enzymatically active. Requires Ca(2+) as cofactor. Post-translationally, synthesized as a 75-kDa precursor form in the endoplasmic reticulum (ER), and then processed by proteolytic cleavage through various intermediates to yield a 55-kDa mature form, with the release of an 18 kDa polypeptide. The conversion to 3-oxoalanine (also known as C-formylglycine, FGly), of a serine or cysteine residue in prokaryotes and of a cysteine residue in eukaryotes, is critical for catalytic activity. Found to be expressed in alpha and beta pancreatic cells.

It is found in the lysosome. It catalyses the reaction Hydrolysis of the 2-sulfate groups of the L-iduronate 2-sulfate units of dermatan sulfate, heparan sulfate and heparin.. Lysosomal enzyme involved in the degradation pathway of dermatan sulfate and heparan sulfate. The polypeptide is Iduronate 2-sulfatase (Ids) (Mus musculus (Mouse)).